The primary structure comprises 512 residues: Histidine ammonia-lyase (512 aa).

Residues 143-145 (CSG) constitute a cross-link (5-imidazolinone (Cys-Gly)). Residue serine 144 is modified to 2,3-didehydroalanine (Ser).

This sequence belongs to the PAL/histidase family. Contains an active site 4-methylidene-imidazol-5-one (MIO), which is formed autocatalytically by cyclization and dehydration of residues Cys-Ser-Gly.

The protein resides in the cytoplasm. The enzyme catalyses L-histidine = trans-urocanate + NH4(+). It functions in the pathway amino-acid degradation; L-histidine degradation into L-glutamate; N-formimidoyl-L-glutamate from L-histidine: step 1/3. The polypeptide is Histidine ammonia-lyase (Streptomyces avermitilis (strain ATCC 31267 / DSM 46492 / JCM 5070 / NBRC 14893 / NCIMB 12804 / NRRL 8165 / MA-4680)).